The primary structure comprises 87 residues: MAEALKEHIYIIPLREVKRAPRWKRGNTAIKDIRAFLVRHMKSEDVKLDKSINEKVWENGSSKPPRKIRVRAMKFEDGQVQAELAEE.

This sequence belongs to the eukaryotic ribosomal protein eL31 family.

The sequence is that of Large ribosomal subunit protein eL31 from Methanoculleus marisnigri (strain ATCC 35101 / DSM 1498 / JR1).